A 207-amino-acid chain; its full sequence is Claudin-11 (207 aa).

Met1 is a topological domain (cytoplasmic). The chain crosses the membrane as a helical span at residues 2–22; it reads VATCLQVVGFVTSFVGWIGVI. The Extracellular segment spans residues 23-82; sequence VTTSTNDWVVTCGYTIPTCRKLDELGSKGLWADCVMATGLYHCKPLVDILILPGYVQACR. A helical membrane pass occupies residues 83-103; it reads ALMIAASVLGLPAILLLLTVL. The Cytoplasmic segment spans residues 104 to 122; that stretch reads PCIRMGQEPGVAKYRRAQL. The chain crosses the membrane as a helical span at residues 123–143; it reads AGVLLILLALCALVATIWFPV. Topologically, residues 144 to 157 are extracellular; that stretch reads CAHRETTIVSFGYS. Residues 158 to 178 traverse the membrane as a helical segment; sequence LYAGWIGAVLCLVGGCVILCC. At 179 to 207 the chain is on the cytoplasmic side; the sequence is AGDAQAFGENRFYYTAGSSSPTHAKSAHV. 2 positions are modified to phosphoserine: Ser197 and Ser198.

It belongs to the claudin family. In terms of assembly, interacts with tetraspanin-3/TSPAN3. Interacts with OCLN.

It is found in the cell junction. The protein localises to the tight junction. It localises to the cell membrane. Functionally, plays a major role in tight junction-specific obliteration of the intercellular space, through calcium-independent cell-adhesion activity. The protein is Claudin-11 (CLDN11) of Homo sapiens (Human).